The sequence spans 126 residues: Small ribosomal subunit protein uS12 (126 aa).

A disordered region spans residues 1–28; sequence MPTINQLVRKGRQSETTKSKSPALQDCP. The residue at position 89 (aspartate 89) is a 3-methylthioaspartic acid. The interval 103–126 is disordered; sequence DTQGVKDRKQARSKYGAKRAKAAK. Residues 113 to 126 are compositionally biased toward basic residues; that stretch reads ARSKYGAKRAKAAK.

The protein belongs to the universal ribosomal protein uS12 family. In terms of assembly, part of the 30S ribosomal subunit. Contacts proteins S8 and S17. May interact with IF1 in the 30S initiation complex.

With S4 and S5 plays an important role in translational accuracy. In terms of biological role, interacts with and stabilizes bases of the 16S rRNA that are involved in tRNA selection in the A site and with the mRNA backbone. Located at the interface of the 30S and 50S subunits, it traverses the body of the 30S subunit contacting proteins on the other side and probably holding the rRNA structure together. The combined cluster of proteins S8, S12 and S17 appears to hold together the shoulder and platform of the 30S subunit. In Burkholderia orbicola (strain MC0-3), this protein is Small ribosomal subunit protein uS12.